Here is a 261-residue protein sequence, read N- to C-terminus: 1-(5-phosphoribosyl)-5-[(5-phosphoribosylamino)methylideneamino] imidazole-4-carboxamide isomerase (261 aa).

Belongs to the HisA/HisF family.

The protein localises to the cytoplasm. It carries out the reaction 1-(5-phospho-beta-D-ribosyl)-5-[(5-phospho-beta-D-ribosylamino)methylideneamino]imidazole-4-carboxamide = 5-[(5-phospho-1-deoxy-D-ribulos-1-ylimino)methylamino]-1-(5-phospho-beta-D-ribosyl)imidazole-4-carboxamide. It participates in amino-acid biosynthesis; L-histidine biosynthesis; L-histidine from 5-phospho-alpha-D-ribose 1-diphosphate: step 4/9. Catalyzes the isomerization of the aminoaldose moiety of ProFAR to the aminoketose of PRFAR. This chain is 1-(5-phosphoribosyl)-5-[(5-phosphoribosylamino)methylideneamino] imidazole-4-carboxamide isomerase, found in Saccharomyces cerevisiae (strain ATCC 204508 / S288c) (Baker's yeast).